We begin with the raw amino-acid sequence, 196 residues long: ATP-dependent Clp protease proteolytic subunit (196 aa).

Ser96 serves as the catalytic Nucleophile. Residue His121 is part of the active site.

The protein belongs to the peptidase S14 family. As to quaternary structure, fourteen ClpP subunits assemble into 2 heptameric rings which stack back to back to give a disk-like structure with a central cavity, resembling the structure of eukaryotic proteasomes.

It localises to the cytoplasm. The catalysed reaction is Hydrolysis of proteins to small peptides in the presence of ATP and magnesium. alpha-casein is the usual test substrate. In the absence of ATP, only oligopeptides shorter than five residues are hydrolyzed (such as succinyl-Leu-Tyr-|-NHMec, and Leu-Tyr-Leu-|-Tyr-Trp, in which cleavage of the -Tyr-|-Leu- and -Tyr-|-Trp bonds also occurs).. Its function is as follows. Cleaves peptides in various proteins in a process that requires ATP hydrolysis. Has a chymotrypsin-like activity. Plays a major role in the degradation of misfolded proteins. This Streptococcus thermophilus (strain CNRZ 1066) protein is ATP-dependent Clp protease proteolytic subunit.